A 136-amino-acid chain; its full sequence is uncharacterized protein (136 aa).

A signal peptide spans 1–35 (MTHRAVPCQPRAFSKIKVLVISFLFLMVAFLPFSS).

This is an uncharacterized protein from Saccharomyces cerevisiae (strain ATCC 204508 / S288c) (Baker's yeast).